The sequence spans 654 residues: Probable Xaa-Pro aminopeptidase P (654 aa).

Mn(2+)-binding residues include Asp449, Asp460, Glu558, and Glu572.

The protein belongs to the peptidase M24B family. Requires Mn(2+) as cofactor.

It catalyses the reaction Release of any N-terminal amino acid, including proline, that is linked to proline, even from a dipeptide or tripeptide.. Its function is as follows. Catalyzes the removal of a penultimate prolyl residue from the N-termini of peptides. The polypeptide is Probable Xaa-Pro aminopeptidase P (ampp) (Aspergillus fumigatus (strain CBS 144.89 / FGSC A1163 / CEA10) (Neosartorya fumigata)).